The chain runs to 202 residues: Succinate dehydrogenase cytochrome b558 subunit (202 aa).

5 consecutive transmembrane segments (helical) span residues 12–31, 60–79, 93–113, 135–155, and 178–196; these read LHSL…HLVV, IFII…YIAF, NWLF…VSWH, ILSS…TIFH, and ISTY…VGLK. The heme site is built by H28, H70, H113, and H155.

It belongs to the cytochrome b558 family. As to quaternary structure, part of an enzyme complex containing three subunits: a flavoprotein, an iron-sulfur protein and cytochrome b-558.

It localises to the cell membrane. The protein operates within carbohydrate metabolism; tricarboxylic acid cycle. Di-heme cytochrome of the succinate dehydrogenase complex. The polypeptide is Succinate dehydrogenase cytochrome b558 subunit (sdhC) (Bacillus subtilis (strain 168)).